We begin with the raw amino-acid sequence, 273 residues long: MAKHLYKTPIPSTRKGTLDRQVKSNPRNNLIHGRHRCGKGRNSRGIITASIEGEVIKRLYRKIDFRRNQKDISGRIVTIESDPNRNAYICLIHYGDGEKRYILHPRGAIIGDTIVSGTKVPISMGNALPLTDMPLGTVMHNKENTRGRGGQLARAAGAVAKHKAKEGKMATLRLPSGEGRIVTQNSLATVGQEGKVGVNQKSLGRAGSKCWLGKRPVVRGVVMNPVDHPHGGGEGKAPIGRKKPTTPWGYPALGRRTRKRKKYSDSFILRRRK.

Disordered regions lie at residues 1–25 (MAKH…VKSN) and 225–253 (PVDH…YPAL).

The protein belongs to the universal ribosomal protein uL2 family. Part of the 50S ribosomal subunit.

Its subcellular location is the plastid. The protein resides in the chloroplast. The protein is Large ribosomal subunit protein uL2cz/uL2cy (rpl2-A) of Triticum aestivum (Wheat).